Here is an 833-residue protein sequence, read N- to C-terminus: Phenylalanine--tRNA ligase beta subunit (833 aa).

In terms of domain architecture, tRNA-binding spans 42–157; sequence ADLKGPLAVG…PEYEVGTDAI (116 aa). One can recognise a B5 domain in the interval 411–485; it reads SAPHTITIPA…RLEGYENLPS (75 aa). Mg(2+)-binding residues include Asp-463, Asp-469, Glu-472, and Glu-473. An FDX-ACB domain is found at 739 to 832; it reads STFPVATQDV…AAERTGAALR (94 aa).

The protein belongs to the phenylalanyl-tRNA synthetase beta subunit family. Type 1 subfamily. In terms of assembly, tetramer of two alpha and two beta subunits. The cofactor is Mg(2+).

It localises to the cytoplasm. The enzyme catalyses tRNA(Phe) + L-phenylalanine + ATP = L-phenylalanyl-tRNA(Phe) + AMP + diphosphate + H(+). This is Phenylalanine--tRNA ligase beta subunit from Streptomyces avermitilis (strain ATCC 31267 / DSM 46492 / JCM 5070 / NBRC 14893 / NCIMB 12804 / NRRL 8165 / MA-4680).